The primary structure comprises 378 residues: UPF0754 membrane protein BCA_0919 (378 aa).

A run of 2 helical transmembrane segments spans residues 1 to 21 (MNIW…GGFT) and 357 to 377 (YLGA…LLFL).

This sequence belongs to the UPF0754 family.

It is found in the cell membrane. This chain is UPF0754 membrane protein BCA_0919, found in Bacillus cereus (strain 03BB102).